Consider the following 1208-residue polypeptide: MNTKDTTEVAENSHHLKIFLPKKLLECLPRCPLLPPERLRWNTNEEIASYLITFEKHDEWLSCAPKTRPQNGSIILYNRKKVKYRKDGYLWKKRKDGKTTREDHMKLKVQGMEPVSWQCLYGCYVHSSIVPTFHRRCYWLLQNPDIVLVHYLNVPALEDCGKGCSPIFCSISSDRREWLKWSREELLGQLKPMFHGIKWSCGNGAEEFSVEQLVQQILDTHPTKPAPRTHACLCSGGLGSGSLTHKCSSTKHRIISPKVEPRALALASISHSKPPEPPPLIAPLPPELPKAHTSPSSSSSSSSSSGFAEPLEIRPSPPTSRGGSSRGGTAILLLTGLEQRAGGLTPTRHLAPQAEPRPPVSLAVVVGSEPSAPPAPPSPAFDPDRFLNSPQRGQTYGGGQGVNPDFPEAEGTHTPCPALEPAAALEPQAAARGLAPQLGANGRRGNKFFIQDDDSGEELKGPGTVPPVPSSPPSSPSSPTALPPSGRATRGEALFGGSAGSSSELEPFSLSSFPDLMGELISDEAPGVPAPAPQLSPALNAITDFSPEWSYPEGGVKVLITGPWTEAAEHYSCVFDHIAVPASLVQPGVLRCYCPAHEVGLVSLQVAGREGPLSASVLFEYRARRFLSLPSTQLDWLSLDDSQFRMSILERLEQMEKRMAEIAAAGQAPGQGPEAPPIQDEGQGPGFEARVVVLVESMIPRSTWRGPERLIHGSPFRGMSLLHLAAAQGYARLIETLSQWRSVETGSLDLEQEVDPLNVDHFSCTPLMWACALGHLEAAVLLFCWNRQALSIPDSLGRLPLSVAHSRGHVRLARCLEELQRQELSVEHPLALSPPSSSPDTGLSSASSPSELSDGTFSVTSAYSSAPDGSPPPAPPLASDISMEMIPGQLSCGAPETPLLLMDYEATNSKEPAPSPCGPPLAQDNGAAPEDADSPPAVDVIPVDMISLAKQIIDATPERIKREDFSEFPDAGASPREHTGTVGLSETMSWLASYLENVDHFPSSAPPSELPFERGRLAIPPAPSWAEFLSASTSGKMESDFALLTLSDHEQRELYEAARVIQTAFRKYKGRRLKEQQEVAAAVIQRCYRKYKQLTWIALKFALYKKMTQAAILIQSKFRSYYEQKRFQQSRRAAVLIQQHYRSYRRRPGPPHRPSGPLPARNKGTFLTKKQDQAARKIMRFLRRCRHRMRELKQNQELEGLPQPGLAT.

Positions 30–160 (RCPLLPPERL…YLNVPALEDC (131 aa)) form a DNA-binding region, CG-1. The short motif at 78 to 86 (NRKKVKYRK) is the Nuclear localization signal element. 3 disordered regions span residues 269–328 (ISHS…SRGG), 366–418 (VGSE…PCPA), and 437–507 (QLGA…ELEP). The segment covering 275–288 (PEPPPLIAPLPPEL) has biased composition (pro residues). Composition is skewed to low complexity over residues 294-305 (SPSSSSSSSSSS) and 319-328 (TSRGGSSRGG). Pro residues-rich tracts occupy residues 371–380 (SAPPAPPSPA) and 464–476 (TVPP…PSSP). An IPT/TIG domain is found at 544-622 (DFSPEWSYPE…LSASVLFEYR (79 aa)). ANK repeat units follow at residues 717 to 750 (RGMS…SLDL), 762 to 792 (FSCT…ALSI), and 796 to 826 (LGRL…ELSV). Disordered stretches follow at residues 826–881 (VEHP…ASDI) and 908–936 (NSKE…DSPP). A compositionally biased stretch (low complexity) spans 829–853 (PLALSPPSSSPDTGLSSASSPSELS). IQ domains follow at residues 1054–1083 (LYEA…AAAV) and 1107–1136 (MTQA…AAVL). The disordered stretch occupies residues 1144–1166 (YRRRPGPPHRPSGPLPARNKGTF).

The protein belongs to the CAMTA family. In terms of assembly, may interact with calmodulin.

It is found in the nucleus. Functionally, transcription activator. May act as tumor suppressor. The chain is Calmodulin-binding transcription activator 2 (Camta2) from Mus musculus (Mouse).